Here is a 452-residue protein sequence, read N- to C-terminus: MELALRRSPVPRWLLLLPLLLGLNAGAVIDWPTEEGKEVWDYVTVRKDAYMFWWLYYATNSCKNFSELPLVMWLQGGPGGSSTGFGNFEEIGPLDSDLKPRKTTWLQAASLLFVDNPVGTGFSYVNGSGAYAKDLAMVASDMMVLLKTFFSCHKEFQTVPFYIFSESYGGKMAAGIGLELYKAIQRGTIKCNFAGVALGDSWISPVDSVLSWGPYLYSMSLLEDKGLAEVSKVAEQVLNAVNKGLYREATELWGKAEMIIEQNTDGVNFYNILTKSTPTSTMESSLEFTQSHLVCLCQRHVRHLQRDALSQLMNGPIRKKLKIIPEDQSWGGQATNVFVNMEEDFMKPVISIVDELLEAGINVTVYNGQLDLIVDTMGQEAWVRKLKWPELPKFSQLKWKALYSDPKSLETSAFVKSYKNLAFYWILKAGHMVPSDQGDMALKMMRLVTQQE.

The signal sequence occupies residues 1-26; the sequence is MELALRRSPVPRWLLLLPLLLGLNAG. 2 N-linked (GlcNAc...) asparagine glycosylation sites follow: N64 and N126. Residue S167 is part of the active site. The N-linked (GlcNAc...) asparagine glycan is linked to N362. Residues D371 and H431 contribute to the active site.

It belongs to the peptidase S10 family.

It is found in the secreted. Its function is as follows. May be involved in vascular wall and kidney homeostasis. The polypeptide is Retinoid-inducible serine carboxypeptidase (SCPEP1) (Homo sapiens (Human)).